A 156-amino-acid polypeptide reads, in one-letter code: Cyanate hydratase (156 aa).

Residues arginine 96, glutamate 99, and serine 122 contribute to the active site.

Belongs to the cyanase family.

The catalysed reaction is cyanate + hydrogencarbonate + 3 H(+) = NH4(+) + 2 CO2. In terms of biological role, catalyzes the reaction of cyanate with bicarbonate to produce ammonia and carbon dioxide. This is Cyanate hydratase from Pseudomonas paraeruginosa (strain DSM 24068 / PA7) (Pseudomonas aeruginosa (strain PA7)).